A 576-amino-acid polypeptide reads, in one-letter code: Sulfite reductase [NADPH] hemoprotein beta-component (576 aa).

Cys-435, Cys-441, Cys-480, and Cys-484 together coordinate [4Fe-4S] cluster. Residue Cys-484 participates in siroheme binding.

The protein belongs to the nitrite and sulfite reductase 4Fe-4S domain family. As to quaternary structure, alpha(8)-beta(8). The alpha component is a flavoprotein, the beta component is a hemoprotein. Siroheme serves as cofactor. It depends on [4Fe-4S] cluster as a cofactor.

The catalysed reaction is hydrogen sulfide + 3 NADP(+) + 3 H2O = sulfite + 3 NADPH + 4 H(+). It functions in the pathway sulfur metabolism; hydrogen sulfide biosynthesis; hydrogen sulfide from sulfite (NADPH route): step 1/1. Functionally, component of the sulfite reductase complex that catalyzes the 6-electron reduction of sulfite to sulfide. This is one of several activities required for the biosynthesis of L-cysteine from sulfate. In Yersinia pseudotuberculosis serotype IB (strain PB1/+), this protein is Sulfite reductase [NADPH] hemoprotein beta-component.